The primary structure comprises 410 residues: Peptidase T (410 aa).

H79 serves as a coordination point for Zn(2+). Residue D81 is part of the active site. Position 142 (D142) interacts with Zn(2+). The active-site Proton acceptor is E176. Residues E177, D199, and H381 each contribute to the Zn(2+) site.

It belongs to the peptidase M20B family. Zn(2+) serves as cofactor.

It is found in the cytoplasm. It catalyses the reaction Release of the N-terminal residue from a tripeptide.. In terms of biological role, cleaves the N-terminal amino acid of tripeptides. The sequence is that of Peptidase T from Bacillus licheniformis (strain ATCC 14580 / DSM 13 / JCM 2505 / CCUG 7422 / NBRC 12200 / NCIMB 9375 / NCTC 10341 / NRRL NRS-1264 / Gibson 46).